The following is a 250-amino-acid chain: F-box only protein 17 (250 aa).

The 48-residue stretch at 15-62 folds into the F-box domain; sequence HMALAELPPELLLQVLSHVPPRALVTRCRPVCRAWRDLVDGPSVWLLQ. The region spanning 99-250 is the FBA domain; sequence FCLLAPLGRN…GLLQGLSRLH (152 aa).

In terms of assembly, part of a SCF (SKP1-cullin-F-box) protein ligase complex. Interacts with SKP1 and CUL1.

In terms of biological role, substrate-recognition component of the SCF (SKP1-CUL1-F-box protein)-type E3 ubiquitin ligase complex. Able to recognize and bind denatured glycoproteins, which are modified with complex-type oligosaccharides. Also recognizes sulfated glycans. Does not bind high-mannose glycoproteins. The chain is F-box only protein 17 (Fbxo17) from Rattus norvegicus (Rat).